The following is a 149-amino-acid chain: Urease accessory protein UreE (149 aa).

Belongs to the UreE family.

Its subcellular location is the cytoplasm. Functionally, involved in urease metallocenter assembly. Binds nickel. Probably functions as a nickel donor during metallocenter assembly. The chain is Urease accessory protein UreE from Ureaplasma parvum serovar 3 (strain ATCC 700970).